A 245-amino-acid polypeptide reads, in one-letter code: 5-oxoprolinase subunit A (245 aa).

The protein belongs to the LamB/PxpA family. As to quaternary structure, forms a complex composed of PxpA, PxpB and PxpC.

It carries out the reaction 5-oxo-L-proline + ATP + 2 H2O = L-glutamate + ADP + phosphate + H(+). Functionally, catalyzes the cleavage of 5-oxoproline to form L-glutamate coupled to the hydrolysis of ATP to ADP and inorganic phosphate. In Chromobacterium violaceum (strain ATCC 12472 / DSM 30191 / JCM 1249 / CCUG 213 / NBRC 12614 / NCIMB 9131 / NCTC 9757 / MK), this protein is 5-oxoprolinase subunit A.